A 122-amino-acid chain; its full sequence is Double-headed protease inhibitor, submandibular gland (122 aa).

Kazal-like domains are found at residues 10 to 70 (GGRK…NCDI) and 71 to 121 (ECTQ…QCES). 6 disulfides stabilise this stretch: cysteine 16-cysteine 50, cysteine 28-cysteine 47, cysteine 36-cysteine 68, cysteine 72-cysteine 101, cysteine 79-cysteine 98, and cysteine 87-cysteine 119.

It is found in the secreted. This inhibitor is composed of two homologous actively inhibiting halves: one which inhibits trypsin, the other which inhibits elastase. The protein is Double-headed protease inhibitor, submandibular gland of Meles meles (Eurasian badger).